The sequence spans 261 residues: Chanoclavine-I dehydrogenase easD (261 aa).

The first 20 residues, 1–20 (MPSMTSKVFAITGGASGIGA), serve as a signal peptide directing secretion. Isoleucine 18 contacts NADP(+). Residue asparagine 43 is glycosylated (N-linked (GlcNAc...) asparagine). The NADP(+) site is built by aspartate 66, arginine 132, tyrosine 166, lysine 170, and threonine 201. The active-site Proton donor is tyrosine 166. Lysine 170 functions as the Lowers pKa of active site Tyr in the catalytic mechanism.

Belongs to the short-chain dehydrogenases/reductases (SDR) family. In terms of assembly, homotetramer.

The catalysed reaction is chanoclavine-I + NAD(+) = chanoclavine-I aldehyde + NADH + H(+). The protein operates within alkaloid biosynthesis; ergot alkaloid biosynthesis. Chanoclavine-I dehydrogenase; part of the gene cluster that mediates the biosynthesis of fungal ergot alkaloid. DmaW catalyzes the first step of ergot alkaloid biosynthesis by condensing dimethylallyl diphosphate (DMAP) and tryptophan to form 4-dimethylallyl-L-tryptophan. The second step is catalyzed by the methyltransferase easF that methylates 4-dimethylallyl-L-tryptophan in the presence of S-adenosyl-L-methionine, resulting in the formation of 4-dimethylallyl-L-abrine. The catalase easC and the FAD-dependent oxidoreductase easE then transform 4-dimethylallyl-L-abrine to chanoclavine-I which is further oxidized by easD in the presence of NAD(+), resulting in the formation of chanoclavine-I aldehyde. Agroclavine dehydrogenase easG then mediates the conversion of chanoclavine-I aldehyde to agroclavine via a non-enzymatic adduct reaction: the substrate is an iminium intermediate that is formed spontaneously from chanoclavine-I aldehyde in the presence of glutathione. The presence of easA is not required to complete this reaction. Further conversion of agroclavine to paspalic acid is a two-step process involving oxidation of agroclavine to elymoclavine and of elymoclavine to paspalic acid, the second step being performed by the elymoclavine oxidase cloA. Paspalic acid is then further converted to D-lysergic acid. Ergopeptines are assembled from D-lysergic acid and three different amino acids by the D-lysergyl-peptide-synthetases composed each of a monomudular and a trimodular nonribosomal peptide synthetase subunit. LpsB and lpsC encode the monomodular subunits responsible for D-lysergic acid activation and incorporation into the ergopeptine backbone. LpsA1 and A2 subunits encode the trimodular nonribosomal peptide synthetase assembling the tripeptide portion of ergopeptines. LpsA1 is responsible for formation of the major ergopeptine, ergotamine, and lpsA2 for alpha-ergocryptine, the minor ergopeptine of the total alkaloid mixture elaborated by C.purpurea. D-lysergyl-tripeptides are assembled by the nonribosomal peptide synthetases and released as N-(D-lysergyl-aminoacyl)-lactams. Cyclolization of the D-lysergyl-tripeptides is performed by the Fe(2+)/2-ketoglutarate-dependent dioxygenase easH which introduces a hydroxyl group into N-(D-lysergyl-aminoacyl)-lactam at alpha-C of the aminoacyl residue followed by spontaneous condensation with the terminal lactam carbonyl group. The polypeptide is Chanoclavine-I dehydrogenase easD (Claviceps purpurea (Ergot fungus)).